The chain runs to 649 residues: FAS-associated factor 1 (649 aa).

One can recognise a UBA domain in the interval 1-57; the sequence is MASNMDREMILADFQACTGIENIDEAITLLEQNNWDLVAAINGVIPQENGILQSDFG. The disordered stretch occupies residues 55-84; that stretch reads DFGGETMPGPTFDPASPPAPAPAPSSSAFR. Phosphoserine is present on serine 319. Residues 568–645 enclose the UBX domain; that stretch reads NAEPVSKLRI…NLFPQETLFL (78 aa). Threonine 579 carries the phosphothreonine modification. The residue at position 581 (serine 581) is a Phosphoserine.

In terms of assembly, interacts with CDT1 and ATPase VCP/p97. Interacts (via UBA domain) with FAS (via death domain). Interacts (via UBA domain) with NLRP12 (via DAPIN/PYRIN domain). In terms of tissue distribution, central nervous system.

It localises to the nucleus. Functionally, ubiquitin-binding protein. Required for the progression of DNA replication forks by targeting DNA replication licensing factor CDT1 for degradation. Potentiates but cannot initiate FAS-induced apoptosis. This chain is FAS-associated factor 1 (Faf1), found in Rattus norvegicus (Rat).